A 195-amino-acid chain; its full sequence is SPI-2 type 3 secretion system translocon protein SctB (195 aa).

A coiled-coil region spans residues 44 to 80 (KLMELAKKLRDIMRSYNVEKQRLAWELQVNVLQTQMK). A run of 3 helical transmembrane segments spans residues 90 to 110 (MITA…GAVG), 115 to 135 (LIAG…GAGV), and 170 to 190 (EIMQ…AEIL).

The protein belongs to the SctB/EspB family. The core secretion machinery of the T3SS is composed of approximately 20 different proteins, including cytoplasmic components, a base, an export apparatus and a needle. This subunit is involved in the formation of a pore, called the translocon, in host membrane. May form a complex with SseB and SseC/SctE2. SseB is required for correct localization of SseD/SctB2 on the bacterial cell surface. Binds to the chaperone SseA.

It localises to the secreted. Its subcellular location is the cell surface. The protein localises to the host membrane. Component of the type III secretion system 2 (SPI-2 T3SS), also called injectisome, which is used to inject bacterial effector proteins into eukaryotic host cells. SseC/SctE2 and SseD/SctB2 are inserted into the host membrane where they form a pore and allow the translocation of effector proteins into the cytosol of target cells. Functionally, required for the translocation of SPI-2 effector proteins. Required for systemic Salmonella infection of the mouse. Essential for SpvB-induced actin depolymerization in the host cell cytoplasm. The polypeptide is SPI-2 type 3 secretion system translocon protein SctB (Salmonella typhimurium (strain LT2 / SGSC1412 / ATCC 700720)).